The sequence spans 507 residues: ATP synthase subunit alpha, chloroplastic (507 aa).

Residue 170–177 (GDRQTGKT) participates in ATP binding.

This sequence belongs to the ATPase alpha/beta chains family. F-type ATPases have 2 components, CF(1) - the catalytic core - and CF(0) - the membrane proton channel. CF(1) has five subunits: alpha(3), beta(3), gamma(1), delta(1), epsilon(1). CF(0) has four main subunits: a, b, b' and c.

It localises to the plastid. The protein resides in the chloroplast thylakoid membrane. It carries out the reaction ATP + H2O + 4 H(+)(in) = ADP + phosphate + 5 H(+)(out). Produces ATP from ADP in the presence of a proton gradient across the membrane. The alpha chain is a regulatory subunit. The chain is ATP synthase subunit alpha, chloroplastic from Nicotiana tomentosiformis (Tobacco).